Here is a 291-residue protein sequence, read N- to C-terminus: Feruloyl esterase B (291 aa).

Residues 1 to 18 form the signal peptide; the sequence is MLVRSFLGFAVLAATCLA. A glycan (N-linked (GlcNAc...) asparagine) is linked at N117. Catalysis depends on S136, which acts as the Charge relay system. N179 is a glycosylation site (N-linked (GlcNAc...) asparagine).

The protein belongs to the carbohydrate esterase 1 (CE1) family. Feruloyl esterase type B subfamily.

It is found in the secreted. The catalysed reaction is feruloyl-polysaccharide + H2O = ferulate + polysaccharide.. Functionally, feruloyl esterase which acts in synergy with xylanases in degradation of plant cell walls. Hydrolyzes the ester linkage of hydroxycinnamic acids (ferulic acid (FA) and p-coumaric acid) and diferulates present in plant cell walls. Is active on substrates containing ferulic acid ester linked to the C-5 and C-2 linkages of arabinofuranose, while it was found capable of de-esterifying acetylated glucuronoxylans. Efficiently releases ferulic acid (FA) from destarched wheat bran when incubated with an M3 xylanase. In Thermothelomyces thermophilus (strain ATCC 42464 / BCRC 31852 / DSM 1799) (Sporotrichum thermophile), this protein is Feruloyl esterase B (Fae1a).